The chain runs to 334 residues: MADPAATPKSLSIACVSIKDTFAEAFDMKATRLIVTADDRRWCDESARAMCGFGTSVIACGLEIAVEQTLSPEQTPDGRPGVAILAFGMSGKDLEKQIPRRAGQCVLTCPTTALYGGIPGGREVHPKRVPIGKSLRYFGDGNQISKQIQHLDADGRSRPVRYWRIPVMDGEFVCQHDVGRVDAIGGGNFILVGRTMQSVTIASRAAIDAMRELPGIITPFPGGTTRSGSKVGSKYAALFASTNDSFCPTLREVTPSELPSEANAAIEVVIDGLSFDEIAESMRVGITAACEAGASEGLLSVSAGNYGGKLGRHHFKLHELLADASSASDSGAER.

It belongs to the FTR family. Homotetramer.

The protein localises to the cytoplasm. It catalyses the reaction N-formylmethanofuran + 5,6,7,8-tetrahydromethanopterin + H(+) = N(5)-formyl-5,6,7,8-tetrahydromethanopterin + methanofuran. It participates in one-carbon metabolism; formaldehyde degradation; formate from formaldehyde (H(4)MPT route): step 4/5. In terms of biological role, catalyzes the transfer of a formyl group from 5-formyl tetrahydromethanopterin (5-formyl-H(4)MPT) to methanofuran (MFR) to produce formylmethanofuran (formyl-MFR) and tetrahydromethanopterin (H(4)MPT). The polypeptide is Formylmethanofuran--tetrahydromethanopterin formyltransferase (Rhodopirellula baltica (strain DSM 10527 / NCIMB 13988 / SH1)).